The chain runs to 218 residues: UPF0502 protein VS_II0353 (218 aa).

This sequence belongs to the UPF0502 family.

This chain is UPF0502 protein VS_II0353, found in Vibrio atlanticus (strain LGP32) (Vibrio splendidus (strain Mel32)).